We begin with the raw amino-acid sequence, 361 residues long: MSKFSFNIHQMHKKARSGVITTAHGEIRTPAFMPVGTRGTIKAMLSESVAETGADILLGNTYHLMLQPSSERIARLGGLHKFMNWHKPILTDSGGFQVMSLSKLCKITEEGVSFSSHINGDKYMLTPERSTEIQYLLGSTITMAFDECTAYPATFEEAKTSVQLTTRWADRSRKAFVKREGYAQFGIIQGSVYQELREQSAKDLVKLDFEGYAIGGLAVGEGQELMFKVLDYTPNFLPQNKPCYLMGVGKPADIIGAVSRGIDMFDCVIPTRSGRNGQAFTKYGTVNIRNSKYADDDEPLEYDCLCPACKNYSKAYLHYLVKIGEILGSMLMTWHNLTYFQNLMSRIRTYIKAGQDFDFIT.

The Proton acceptor role is filled by D92. Residues 92 to 96 (DSGGF), D146, Q189, and G216 each bind substrate. An RNA binding region spans residues 247 to 253 (GVGKPAD). Catalysis depends on D266, which acts as the Nucleophile. Residues 271-275 (TRSGR) form an RNA binding; important for wobble base 34 recognition region. Residues C304, C306, C309, and H335 each coordinate Zn(2+).

This sequence belongs to the queuine tRNA-ribosyltransferase family. In terms of assembly, homodimer. Within each dimer, one monomer is responsible for RNA recognition and catalysis, while the other monomer binds to the replacement base PreQ1. Requires Zn(2+) as cofactor.

The enzyme catalyses 7-aminomethyl-7-carbaguanine + guanosine(34) in tRNA = 7-aminomethyl-7-carbaguanosine(34) in tRNA + guanine. Its pathway is tRNA modification; tRNA-queuosine biosynthesis. Its function is as follows. Catalyzes the base-exchange of a guanine (G) residue with the queuine precursor 7-aminomethyl-7-deazaguanine (PreQ1) at position 34 (anticodon wobble position) in tRNAs with GU(N) anticodons (tRNA-Asp, -Asn, -His and -Tyr). Catalysis occurs through a double-displacement mechanism. The nucleophile active site attacks the C1' of nucleotide 34 to detach the guanine base from the RNA, forming a covalent enzyme-RNA intermediate. The proton acceptor active site deprotonates the incoming PreQ1, allowing a nucleophilic attack on the C1' of the ribose to form the product. After dissociation, two additional enzymatic reactions on the tRNA convert PreQ1 to queuine (Q), resulting in the hypermodified nucleoside queuosine (7-(((4,5-cis-dihydroxy-2-cyclopenten-1-yl)amino)methyl)-7-deazaguanosine). This is Queuine tRNA-ribosyltransferase from Rickettsia canadensis (strain McKiel).